The following is a 194-amino-acid chain: Molybdenum cofactor guanylyltransferase (194 aa).

GTP is bound by residues 12–14, K25, N53, D70, and D100; that span reads LAG. D100 provides a ligand contact to Mg(2+).

This sequence belongs to the MobA family. Monomer. Mg(2+) serves as cofactor.

It localises to the cytoplasm. The catalysed reaction is Mo-molybdopterin + GTP + H(+) = Mo-molybdopterin guanine dinucleotide + diphosphate. Functionally, transfers a GMP moiety from GTP to Mo-molybdopterin (Mo-MPT) cofactor (Moco or molybdenum cofactor) to form Mo-molybdopterin guanine dinucleotide (Mo-MGD) cofactor. This Aliivibrio salmonicida (strain LFI1238) (Vibrio salmonicida (strain LFI1238)) protein is Molybdenum cofactor guanylyltransferase.